A 289-amino-acid chain; its full sequence is Diaminopimelate epimerase (289 aa).

Substrate contacts are provided by Asn-13, Gln-47, and Asn-67. Cys-76 functions as the Proton donor in the catalytic mechanism. Substrate is bound by residues 77-78, Asn-167, Asn-200, and 218-219; these read GN and ER. Residue Cys-227 is the Proton acceptor of the active site. Substrate is bound at residue 228-229; the sequence is GT.

The protein belongs to the diaminopimelate epimerase family. As to quaternary structure, homodimer.

It is found in the cytoplasm. The catalysed reaction is (2S,6S)-2,6-diaminopimelate = meso-2,6-diaminopimelate. Its pathway is amino-acid biosynthesis; L-lysine biosynthesis via DAP pathway; DL-2,6-diaminopimelate from LL-2,6-diaminopimelate: step 1/1. Catalyzes the stereoinversion of LL-2,6-diaminopimelate (L,L-DAP) to meso-diaminopimelate (meso-DAP), a precursor of L-lysine and an essential component of the bacterial peptidoglycan. The sequence is that of Diaminopimelate epimerase from Burkholderia mallei (strain NCTC 10247).